Consider the following 336-residue polypeptide: F-box protein At5g50450 (336 aa).

The F-box domain occupies 19-70 (NNHFEDLHDDLIISILRKLATSASSPSDFLTVLSTCKRLNRLGLHPLVLSKA). Zn(2+)-binding residues include His-263, Cys-266, Cys-279, Cys-282, Cys-288, Cys-292, His-301, and Cys-305. The MYND-type; atypical zinc finger occupies 263-305 (HGGCGRPETRAHEFRRCSVCGKVNYCSRGCQALDWRAKHKVEC).

The polypeptide is F-box protein At5g50450 (Arabidopsis thaliana (Mouse-ear cress)).